The sequence spans 450 residues: Large terminase protein homolog UL15b (450 aa).

Belongs to the herpesviridae large terminase family.

The chain is Large terminase protein homolog UL15b (UL15b) from Psittacid herpesvirus 1 (isolate Amazon parrot/-/97-0001/1997) (PsHV-1).